We begin with the raw amino-acid sequence, 340 residues long: E3 ubiquitin ligase BIG BROTHER-related (340 aa).

2 disordered regions span residues 1 to 56 and 133 to 182; these read MPME…GVGE and YDED…GNSD. The segment covering 34-46 has biased composition (polar residues); sequence NRQTGVVSDTGSG. Acidic residues-rich tracts occupy residues 133-164 and 173-182; these read YDED…EDGL and DDQEDDGNSD. The segment at 288–329 adopts an RING-type; atypical zinc-finger fold; the sequence is CVICRLDYEDDEDLILLPCKHSYHSECINNWLKINKVCPVCS.

Auto-ubiquitinated.

It catalyses the reaction S-ubiquitinyl-[E2 ubiquitin-conjugating enzyme]-L-cysteine + [acceptor protein]-L-lysine = [E2 ubiquitin-conjugating enzyme]-L-cysteine + N(6)-ubiquitinyl-[acceptor protein]-L-lysine.. Its pathway is protein modification; protein ubiquitination. E3 ubiquitin-ligase probably involved in organ size regulation. This chain is E3 ubiquitin ligase BIG BROTHER-related (BBR), found in Arabidopsis thaliana (Mouse-ear cress).